Consider the following 160-residue polypeptide: Serine-protein kinase RsbW (160 aa).

The protein belongs to the anti-sigma-factor family.

It carries out the reaction L-seryl-[protein] + ATP = O-phospho-L-seryl-[protein] + ADP + H(+). The enzyme catalyses L-threonyl-[protein] + ATP = O-phospho-L-threonyl-[protein] + ADP + H(+). Negative regulator of sigma-B activity. Phosphorylates and inactivates its specific antagonist protein, RsbV. Upon phosphorylation of RsbV, RsbW is released and binds to sigma-B, thereby blocking its ability to form an RNA polymerase holoenzyme (E-sigma-B). This Bacillus cereus (strain ATCC 10987 / NRS 248) protein is Serine-protein kinase RsbW.